The sequence spans 340 residues: Thioesterase pkgB (340 aa).

Zn(2+)-binding residues include histidine 97, histidine 99, aspartate 101, histidine 102, and histidine 205. Catalysis depends on aspartate 101, which acts as the Proton donor/acceptor. Over residues 242–258 (SSRNGGSTSSIGSVSES) the composition is skewed to low complexity. Positions 242-271 (SSRNGGSTSSIGSVSESGDSDEEDNNMKTS) are disordered.

Belongs to the metallo-beta-lactamase superfamily. Requires Zn(2+) as cofactor.

The enzyme catalyses 3,5,7,9,11,13-hexaoxotetradecanoyl-[ACP] = dehydrocitreoisocoumarin + holo-[ACP] + H2O. It carries out the reaction 3,5,7,9,11-pentaoxododecanoyl-[ACP] = 6,8-dihydroxy-3-(2-oxopropyl)-isocoumarin + holo-[ACP] + H2O. Thioesterase; part of the pkg gene cluster that mediates the biosynthesis of dihydrocitreoisocoumarin and 6,8-dihydroxy-3-(2-oxopropyl)-isocoumarin. The non-reducing polyketide synthase pkgA performs the condensation of one acetyl-CoA starter unit with 6 and 5 malonyl-CoA units, respectively. As pkgA lacks a releasing domain, the thioesterase pkgB is necessary to break the thioester bond and release dihydrocitreoisocoumarin and 6,8-dihydroxy-3-(2-oxopropyl)-isocoumarin from pkgA. The chain is Thioesterase pkgB from Emericella nidulans (strain FGSC A4 / ATCC 38163 / CBS 112.46 / NRRL 194 / M139) (Aspergillus nidulans).